An 87-amino-acid chain; its full sequence is MKVLVLITLAVLGAMFVWTSAAELEERGSDQRDSPAWVKSMERIFQSEERACREWLGGCSKDADCCAHLECRKKWPYHCVWDWTVRK.

A signal peptide spans 1-21 (MKVLVLITLAVLGAMFVWTSA). A propeptide spanning residues 22 to 50 (AELEERGSDQRDSPAWVKSMERIFQSEER) is cleaved from the precursor. Disulfide bonds link cysteine 52–cysteine 66, cysteine 59–cysteine 71, and cysteine 65–cysteine 79.

This sequence belongs to the neurotoxin 10 (Hwtx-1) family. 39 (Jztx-34) subfamily. In terms of tissue distribution, expressed by the venom gland.

It localises to the secreted. Potent and selective inhibitor of hNav1.7/SCN9A (IC(50)=610 nM). Also shows a weak activity towards Nav1.3/SCN3A (IC(50)=7950 nM). In addition, inhibits voltage-gated potassium channels (Kv) in rat DRG neurons. It does not alter the voltage dependence of activation, but it causes a small hyperpolarizing shift in the steady-state inactivations of Nav1.7/SNC9A. Chimera experiments show that the toxin binds to the DIIS3-S4 linker (site 4) of Nav1.7/SCN9A, whereas Nav1.7/SCN9A Asp-827 residue is shown by substitution experiments to be critical for its sensitivity. The toxin traps the domain II voltage sensor in the closed configuration, and not in an outward position. In vivo, shows analgesic activity in three rodent pain models (formalin-induced, acid-induced, and thermal). The sequence is that of Mu-theraphotoxin-Cg1a from Chilobrachys guangxiensis (Chinese earth tiger tarantula).